We begin with the raw amino-acid sequence, 357 residues long: Protein BMRF2 (357 aa).

Over 1–11 the chain is Virion surface; it reads MFSCKQHLSLG. A transmembrane span lies at residues 12 to 32; sequence ACVFCLGLLASTPFIWCFVFA. The Virion surface segment spans residues 33–46; it reads NLLSLEIFSPWQTH. A transmembrane span lies at residues 47–67; the sequence is VYRLGFPTACLMAVLWTLVPA. The Virion surface segment spans residues 68 to 70; the sequence is KHA. A transmembrane span lies at residues 71–91; the sequence is VRAVTPAIMLNIASALIFFSL. Residues 92 to 98 lie on the Virion surface side of the membrane; sequence RVYSTST. A transmembrane helix spans residues 99 to 121; the sequence is WVSAPCLFLANLPLLCLWPRLAI. The Virion surface segment spans residues 122–133; that stretch reads EIVYICPAIHQR. The hydrophobic stretch at 134–154 threads the membrane; sequence FFELGLLLACTIFALSVVSRA. Topologically, residues 155–158 are virion surface; sequence LEVS. The hydrophobic stretch at 159–179 threads the membrane; that stretch reads AVFMSPFFIFLALGSGSLAGA. At 180–217 the chain is on the virion surface side; the sequence is RRNQIYTSGLERRRSIFCARGDHSVASLKETLHKCPWD. Residues 199–201 carry the Integrin binding site motif; sequence RGD. At 218–238 the chain is embedded in the membrane; it reads LLAISALTVLVVCVMIVLHVH. The Virion surface segment spans residues 239–240; that stretch reads AE. A transmembrane helix spans residues 241–261; it reads VFFGLSRYLPLFLCGAMASGG. At 262–267 the chain is on the virion surface side; it reads LYLGHS. A membrane pass occupies residues 268-288; that stretch reads SIIACVMATLCTLTSVVVYFL. Over 289 to 298 the chain is Virion surface; that stretch reads HETLGPLGKT. The chain crosses the lipid bilayer at residues 299–319; that stretch reads VLFISIFVYYFSGVAALSAAM. At 320-335 the chain is on the virion surface side; sequence RYKLKKFVNGPLVHLR. Residues 336-356 are membrane-embedded; that stretch reads VVYMCCFVFTFCEYLLVTFIK. S357 is a topological domain (virion surface).

It belongs to the herpesviridae BMRF2 family. In terms of assembly, interacts with BDLF2. Interacts with host beta1 integrin family. Extensively glycosylated by O-linked oligosaccharides.

The protein resides in the virion membrane. It is found in the host cell membrane. Facilitates virus attachment to oral epithelial cells by binding to host beta1 integrin family. Participates in rearrangement of cellular actin to increase intercellular contacts by binding BDLF2 and thereby promote virus cell-to-cell spreading. The polypeptide is Protein BMRF2 (Homo sapiens (Human)).